A 173-amino-acid chain; its full sequence is Fimbrial protein PrsE (173 aa).

The N-terminal stretch at Met-1–Ala-24 is a signal peptide.

It localises to the secreted. The protein resides in the fimbrium. Its function is as follows. Fimbriae (also called pili), polar filaments radiating from the surface of the bacterium to a length of 0.5-1.5 micrometers and numbering 100-300 per cell, enable bacteria to colonize the epithelium of specific host organs. This chain is Fimbrial protein PrsE (prsE), found in Escherichia coli.